The primary structure comprises 314 residues: Thioredoxin reductase aclD (314 aa).

FAD is bound by residues 13–16, 35–40, His47, and Ala112; these read GGPA and DSKSYR. The cysteines at positions 136 and 139 are disulfide-linked. Residues Asp281 and 288-289 contribute to the FAD site; that span reads AA.

It belongs to the class-II pyridine nucleotide-disulfide oxidoreductase family. Homodimer. Requires FAD as cofactor.

Its pathway is mycotoxin biosynthesis. Its function is as follows. Thioredoxin reductase; part of the gene cluster that mediates the biosynthesis of aspirochlorine (or antibiotic A30641), an unusual halogenated spiro compound with distinctive antifungal properties due to selective inhibition of protein biosynthesis, and which is also active against bacteria, viruses, and murine tumor cells. The non-ribosomal peptide synthetase (NRPS) aclP is responsible the formation of the diketopiperazine (DKP) core from the condensation of 2 phenylalanine residues. One Phe residue is tailored into chlorotyrosine by hydroxylation and chlorination, whereas the second Phe undergoes an unprecedented C-C bond cleavage to be converted into glycine. After formation of the DKP, sulfur is incorporated into the DKP by conjugation with glutathione by aclG, followed by its stepwise degradation to the thiol by aclI, aclJ and aclK, and the dithiol oxidation by aclT. In addition, oxygenases (aclB, aclC, aclL and aclO) and O-methyltransferases (aclM and aclU) act as tailoring enzymes to produce the intermediate dechloroaspirochlorine. Ultimately, chlorination of dechloroaspirochlorine by the halogenase aclH is the last step in the aspirochlorine pathway. The polypeptide is Thioredoxin reductase aclD (Aspergillus oryzae (strain ATCC 42149 / RIB 40) (Yellow koji mold)).